Here is a 398-residue protein sequence, read N- to C-terminus: Thyrotropin-releasing hormone receptor (398 aa).

The Extracellular segment spans residues 1–28 (MENETGSELNQTQLQPRAVVALEYQVVT). Asparagine 3 and asparagine 10 each carry an N-linked (GlcNAc...) asparagine glycan. Residues 29 to 51 (ILLVLIICGLGIVGNIMVVLVVM) form a helical membrane-spanning segment. At 52–61 (RTKHMRTPTN) the chain is on the cytoplasmic side. The chain crosses the membrane as a helical span at residues 62–83 (CYLVSLAVADLMVLVAAGLPNI). The Extracellular portion of the chain corresponds to 84–99 (TDSIYGSWVYGYVGCL). An intrachain disulfide couples cysteine 98 to cysteine 179. The helical transmembrane segment at 100 to 121 (CITYLQYLGINASSCSITAFTI) threads the bilayer. Topologically, residues 122 to 144 (ERYIAICHPIKAQFLCTFSRAKK) are cytoplasmic. A helical membrane pass occupies residues 145–168 (IIIFVWAFTSIYCMLWFFLLDLNI). Residues 169 to 193 (STYKDAIVVSCGYKISRNYYSPIYL) are Extracellular-facing. Residues 194-215 (MDFGVFYVVPMILATVLYGFIA) traverse the membrane as a helical segment. The Cytoplasmic segment spans residues 216–266 (RILFLNPIPSDPKENSNMWKNDSTHQNKNLNSKTSNRYFNSTVSSRKQVTK). Residues 267-288 (MLAVVVILFALLWMPYRTLVVV) form a helical membrane-spanning segment. The Extracellular segment spans residues 289–296 (NSFLSSPF). The helical transmembrane segment at 297-319 (QENWFLLFCRICIYLNSAINPVI) threads the bilayer. Topologically, residues 320–398 (YNLMSQKFRA…LASEITFNQS (79 aa)) are cytoplasmic.

This sequence belongs to the G-protein coupled receptor 1 family.

The protein resides in the cell membrane. Functionally, receptor for thyrotropin-releasing hormone (TRH). Upon ligand binding, this G-protein-coupled receptor triggers activation of the phosphatidylinositol (IP3)-calcium-protein kinase C (PKC) pathway. The protein is Thyrotropin-releasing hormone receptor (TRHR) of Bos taurus (Bovine).